Reading from the N-terminus, the 215-residue chain is Pyridoxine/pyridoxamine 5'-phosphate oxidase (215 aa).

Residues 9-12 (RRDY) and Lys-69 contribute to the substrate site. FMN is bound by residues 64–69 (RVLLLK), 79–80 (FT), Lys-86, and Gln-108. The substrate site is built by Tyr-126, Arg-130, and Ser-134. FMN contacts are provided by residues 143–144 (QS) and Trp-188. 194-196 (RLH) contacts substrate. Arg-198 contributes to the FMN binding site.

Belongs to the pyridoxamine 5'-phosphate oxidase family. As to quaternary structure, homodimer. FMN serves as cofactor.

It catalyses the reaction pyridoxamine 5'-phosphate + O2 + H2O = pyridoxal 5'-phosphate + H2O2 + NH4(+). It carries out the reaction pyridoxine 5'-phosphate + O2 = pyridoxal 5'-phosphate + H2O2. It functions in the pathway cofactor metabolism; pyridoxal 5'-phosphate salvage; pyridoxal 5'-phosphate from pyridoxamine 5'-phosphate: step 1/1. The protein operates within cofactor metabolism; pyridoxal 5'-phosphate salvage; pyridoxal 5'-phosphate from pyridoxine 5'-phosphate: step 1/1. In terms of biological role, catalyzes the oxidation of either pyridoxine 5'-phosphate (PNP) or pyridoxamine 5'-phosphate (PMP) into pyridoxal 5'-phosphate (PLP). The polypeptide is Pyridoxine/pyridoxamine 5'-phosphate oxidase (Pseudomonas entomophila (strain L48)).